Here is a 345-residue protein sequence, read N- to C-terminus: Protein-glutamate methylesterase/protein-glutamine glutaminase 1 (345 aa).

One can recognise a Response regulatory domain in the interval 8–123 (SVLVIDDSAH…FEAMEALRVE (116 aa)). Residue Asp59 is modified to 4-aspartylphosphate. Residues 151–344 (AGEPPLVVAV…PALAALARRR (194 aa)) form the CheB-type methylesterase domain. Active-site residues include Ser163, His190, and Asp286.

Belongs to the CheB family. In terms of processing, phosphorylated by CheA. Phosphorylation of the N-terminal regulatory domain activates the methylesterase activity.

Its subcellular location is the cytoplasm. The enzyme catalyses [protein]-L-glutamate 5-O-methyl ester + H2O = L-glutamyl-[protein] + methanol + H(+). The catalysed reaction is L-glutaminyl-[protein] + H2O = L-glutamyl-[protein] + NH4(+). In terms of biological role, involved in chemotaxis. Part of a chemotaxis signal transduction system that modulates chemotaxis in response to various stimuli. Catalyzes the demethylation of specific methylglutamate residues introduced into the chemoreceptors (methyl-accepting chemotaxis proteins or MCP) by CheR. Also mediates the irreversible deamidation of specific glutamine residues to glutamic acid. The polypeptide is Protein-glutamate methylesterase/protein-glutamine glutaminase 1 (Myxococcus xanthus (strain DK1622)).